Consider the following 112-residue polypeptide: Transmembrane protein 14 homolog (112 aa).

4 consecutive transmembrane segments (helical) span residues 9 to 26, 36 to 53, 60 to 77, and 87 to 109; these read FKLN…GVIG, LIAG…AYYL, VGLG…GVMG, and IPII…LYNI.

It belongs to the TMEM14 family.

The protein resides in the membrane. This chain is Transmembrane protein 14 homolog, found in Dictyostelium discoideum (Social amoeba).